Reading from the N-terminus, the 692-residue chain is Hexamerin-1.1 (692 aa).

The first 18 residues, M1–G18, serve as a signal peptide directing secretion. A glycan (N-linked (GlcNAc...) asparagine) is linked at N203.

It belongs to the hemocyanin family. In terms of assembly, homohexamer. In terms of tissue distribution, larval fat body.

It is found in the secreted. It localises to the extracellular space. Larval storage protein (LSP) which may serve as a store of amino acids for synthesis of adult proteins. This chain is Hexamerin-1.1 (HexA), found in Anopheles gambiae (African malaria mosquito).